The chain runs to 48 residues: uncharacterized protein (48 aa).

The chain crosses the membrane as a helical span at residues 20 to 37 (ILASPLFFANYVLHAAIH).

The protein localises to the membrane. This is an uncharacterized protein from Saccharomyces cerevisiae (strain ATCC 204508 / S288c) (Baker's yeast).